Reading from the N-terminus, the 38-residue chain is Bacteriocin BAC79 (38 aa).

Its activity is regulated as follows. The antimicrobial activity of BAC79 was completely lost after treatment with enzymes trypsin, pepsin, proteinase-K, and carboxypeptidase, while there was no loss of activity with either amylase or lipase. Its function is as follows. Has antibacterial activity against a wide spectrum of Gram-positive and Gram-negative bacteria, including L.monocytogenes which is inhibited through disruption of the cell membrane. The sequence is that of Bacteriocin BAC79 from Weissella confusa (Lactobacillus confusus).